We begin with the raw amino-acid sequence, 163 residues long: Nucleotide-binding protein Noca_0564 (163 aa).

This sequence belongs to the YajQ family.

Nucleotide-binding protein. This chain is Nucleotide-binding protein Noca_0564, found in Nocardioides sp. (strain ATCC BAA-499 / JS614).